We begin with the raw amino-acid sequence, 106 residues long: uncharacterized protein (106 aa).

It belongs to the SUI1 family.

This is an uncharacterized protein from Haemophilus influenzae (strain ATCC 51907 / DSM 11121 / KW20 / Rd).